Here is a 218-residue protein sequence, read N- to C-terminus: DNA-directed RNA polymerase III subunit RPC7-like (218 aa).

The disordered stretch occupies residues 130-218; that stretch reads TIILPKRPPK…SDDNMDEAIY (89 aa). The span at 139-160 shows a compositional bias: basic and acidic residues; the sequence is KTTEDKEETIQKLETLEKKEEE. 2 stretches are compositionally biased toward acidic residues: residues 161–193 and 201–218; these read VTSE…EETD and NGED…EAIY.

The protein belongs to the eukaryotic RPC7 RNA polymerase subunit family. As to quaternary structure, component of the RNA polymerase III (Pol III) complex consisting of 17 subunits. Pol III exists as two alternative complexes defined by the mutually exclusive incorporation of subunit POLR3G/RPC7alpha or POLR3GL/RPC7beta. Found in a trimeric complex with POLR3C/RPC3 and POLR3F/RPC6. Directly interacts with POLR3C.

It localises to the nucleus. Its function is as follows. DNA-dependent RNA polymerase catalyzes the transcription of DNA into RNA using the four ribonucleoside triphosphates as substrates. Specific peripheric component of RNA polymerase III which synthesizes small RNAs, such as 5S rRNA and tRNAs. In Bos taurus (Bovine), this protein is DNA-directed RNA polymerase III subunit RPC7-like (POLR3GL).